The following is a 388-amino-acid chain: 1-deoxy-D-xylulose 5-phosphate reductoisomerase (388 aa).

Residues Thr-10, Gly-11, Ser-12, Ile-13, Asn-37, and Asn-121 each coordinate NADPH. 1-deoxy-D-xylulose 5-phosphate is bound at residue Lys-122. Residue Glu-123 participates in NADPH binding. Asp-147 is a binding site for Mn(2+). Positions 148, 149, 173, and 196 each coordinate 1-deoxy-D-xylulose 5-phosphate. Position 149 (Glu-149) interacts with Mn(2+). An NADPH-binding site is contributed by Gly-202. Residues Ser-209, Asn-214, Lys-215, and Glu-218 each coordinate 1-deoxy-D-xylulose 5-phosphate. Glu-218 provides a ligand contact to Mn(2+).

It belongs to the DXR family. The cofactor is Mg(2+). Requires Mn(2+) as cofactor.

The enzyme catalyses 2-C-methyl-D-erythritol 4-phosphate + NADP(+) = 1-deoxy-D-xylulose 5-phosphate + NADPH + H(+). Its pathway is isoprenoid biosynthesis; isopentenyl diphosphate biosynthesis via DXP pathway; isopentenyl diphosphate from 1-deoxy-D-xylulose 5-phosphate: step 1/6. Catalyzes the NADPH-dependent rearrangement and reduction of 1-deoxy-D-xylulose-5-phosphate (DXP) to 2-C-methyl-D-erythritol 4-phosphate (MEP). This chain is 1-deoxy-D-xylulose 5-phosphate reductoisomerase, found in Lachnoclostridium phytofermentans (strain ATCC 700394 / DSM 18823 / ISDg) (Clostridium phytofermentans).